The following is a 372-amino-acid chain: SAM domain-containing protein SAMSN-1 (372 aa).

The tract at residues 1–71 (MLKRKPSNAS…SGGSLGKKVR (71 aa)) is disordered. The Important for interaction with 14-3-3 proteins motif lies at 20–25 (RSSSFG). Phosphoserine is present on residues Ser23 and Ser34. Over residues 37-49 (KSDDSIEVHDREL) the composition is skewed to basic and acidic residues. Residues 52–63 (GSEEQSKTSSSG) are compositionally biased toward low complexity. The residue at position 74 (Ser74) is a Phosphoserine. Thr76 bears the Phosphothreonine mark. Phosphoserine occurs at positions 90, 97, and 119. Positions 90–111 (SEEKEEESGEEALPYRNSDPMI) are disordered. A compositionally biased stretch (low complexity) spans 129–146 (LYSGQSSSSGITSCSDGT). The interval 129-153 (LYSGQSSSSGITSCSDGTSNRDSFR) is disordered. Tyr160 carries the phosphotyrosine modification. Residues 163–224 (PFCGRAKVHT…KFIYVDVILE (62 aa)) enclose the SH3 domain. The SAM domain maps to 241–305 (ENHQTIQEFL…LSAAESLLDE (65 aa)). The tract at residues 304 to 372 (DEETTVEHEK…QKIAITESSD (69 aa)) is disordered. Residues 317–329 (PLSSNPDILSASQ) show a composition bias toward polar residues.

As to quaternary structure, interacts with FASLG. Interacts with phosphotyrosine containing proteins. Interacts (via SH3 domain) with CTTN. Interacts (phosphorylated at Ser-23) with YWHAB, YWHAE, YWHAG, YWHAH, YWHAZ and SFN. Interacts directly with SAP30 and HDAC1. Identified in a complex with SAP30 and HDAC1. In terms of tissue distribution, detected in spleen and lymph node (at protein level).

It localises to the nucleus. The protein localises to the cytoplasm. Its subcellular location is the cell projection. The protein resides in the ruffle. Negative regulator of B-cell activation. Down-regulates cell proliferation (in vitro). Promotes RAC1-dependent membrane ruffle formation and reorganization of the actin cytoskeleton. Regulates cell spreading and cell polarization. Stimulates HDAC1 activity. Regulates LYN activity by modulating its tyrosine phosphorylation. This chain is SAM domain-containing protein SAMSN-1 (Samsn1), found in Mus musculus (Mouse).